Consider the following 74-residue polypeptide: UPF0435 protein ABC2298 (74 aa).

This sequence belongs to the UPF0435 family.

This is UPF0435 protein ABC2298 from Shouchella clausii (strain KSM-K16) (Alkalihalobacillus clausii).